The sequence spans 519 residues: 3-octaprenyl-4-hydroxybenzoate carboxy-lyase (519 aa).

Position 177 (Asn177) interacts with Mn(2+). Residues Ile180–Arg182, Arg194–Leu196, and Arg199–Gly200 each bind prenylated FMN. A Mn(2+)-binding site is contributed by Glu243. Asp318 functions as the Proton donor in the catalytic mechanism.

Belongs to the UbiD family. In terms of assembly, homohexamer. It depends on prenylated FMN as a cofactor. Mn(2+) is required as a cofactor.

It is found in the cell membrane. It catalyses the reaction a 4-hydroxy-3-(all-trans-polyprenyl)benzoate + H(+) = a 2-(all-trans-polyprenyl)phenol + CO2. It functions in the pathway cofactor biosynthesis; ubiquinone biosynthesis. Its function is as follows. Catalyzes the decarboxylation of 3-octaprenyl-4-hydroxy benzoate to 2-octaprenylphenol, an intermediate step in ubiquinone biosynthesis. The protein is 3-octaprenyl-4-hydroxybenzoate carboxy-lyase of Burkholderia mallei (strain ATCC 23344).